The following is a 419-amino-acid chain: Carboxypeptidase A1 (419 aa).

Residues 1-16 (MKRLLVLSVLLAAVFG) form the signal peptide. The propeptide at 17–110 (NENFVGHQVL…KQQMSAFQAR (94 aa)) is activation peptide. Residues 121 to 414 (TYHTLDEIYE…LALLTIMDHT (294 aa)) form the Peptidase M14 domain. Residues His179 and Glu182 each contribute to the Zn(2+) site. Residues 179–182 (HSRE), Arg237, and 254–255 (NR) contribute to the substrate site. Cys248 and Cys271 are joined by a disulfide. A Zn(2+)-binding site is contributed by His306. Substrate is bound by residues 307–308 (SY) and Tyr358. Residue Glu380 is the Proton donor/acceptor of the active site.

This sequence belongs to the peptidase M14 family. As to quaternary structure, monomer. The cofactor is Zn(2+).

The protein localises to the secreted. It carries out the reaction Release of a C-terminal amino acid, but little or no action with -Asp, -Glu, -Arg, -Lys or -Pro.. In terms of biological role, carboxypeptidase that catalyzes the release of a C-terminal amino acid, but has little or no action with -Asp, -Glu, -Arg, -Lys or -Pro. This chain is Carboxypeptidase A1 (Cpa1), found in Mus musculus (Mouse).